A 148-amino-acid chain; its full sequence is Transcriptional regulator MraZ (148 aa).

SpoVT-AbrB domains lie at 5 to 53 (ETAI…AESE) and 82 to 125 (AAHL…SEQA).

It belongs to the MraZ family. Forms oligomers.

The protein resides in the cytoplasm. It is found in the nucleoid. This chain is Transcriptional regulator MraZ, found in Stenotrophomonas maltophilia (strain R551-3).